A 65-amino-acid polypeptide reads, in one-letter code: Defensin-B3 (65 aa).

Residues 1–21 form the signal peptide; that stretch reads MRLLLVFFFLSLLDQAPPARS. Intrachain disulfides connect Cys-29/Cys-58, Cys-36/Cys-50, and Cys-40/Cys-59. The propeptide occupies 62-65; sequence ESPR.

The protein belongs to the beta-defensin family. In terms of tissue distribution, lowly expressed in spleen, and expressed at lower levels in kidney, lung and testis.

The protein localises to the secreted. Functionally, has antimicrobial activity. The sequence is that of Defensin-B3 from Ornithorhynchus anatinus (Duckbill platypus).